The chain runs to 323 residues: Peroxidase 16 (323 aa).

A signal peptide spans 1–23 (MKNQSSFSIVALLLIFFSSSVFA). Disulfide bonds link cysteine 34–cysteine 113, cysteine 67–cysteine 72, cysteine 119–cysteine 319, and cysteine 198–cysteine 230. Histidine 65 serves as the catalytic Proton acceptor. Ca(2+) contacts are provided by aspartate 66, valine 69, glycine 71, aspartate 73, and serine 75. Proline 161 is a binding site for substrate. Histidine 191 is a binding site for heme b. Threonine 192 is a binding site for Ca(2+). Ca(2+) contacts are provided by aspartate 243, serine 246, and aspartate 251.

Belongs to the peroxidase family. Classical plant (class III) peroxidase subfamily. It depends on heme b as a cofactor. Ca(2+) is required as a cofactor. In terms of tissue distribution, expressed in the whole plant, but preferentially in roots and leaves.

It is found in the secreted. It catalyses the reaction 2 a phenolic donor + H2O2 = 2 a phenolic radical donor + 2 H2O. Its function is as follows. Removal of H(2)O(2), oxidation of toxic reductants, biosynthesis and degradation of lignin, suberization, auxin catabolism, response to environmental stresses such as wounding, pathogen attack and oxidative stress. These functions might be dependent on each isozyme/isoform in each plant tissue. This Arabidopsis thaliana (Mouse-ear cress) protein is Peroxidase 16 (PER16).